We begin with the raw amino-acid sequence, 339 residues long: Ribosomal RNA small subunit methyltransferase C (339 aa).

It belongs to the methyltransferase superfamily. RsmC family. In terms of assembly, monomer.

The protein localises to the cytoplasm. It catalyses the reaction guanosine(1207) in 16S rRNA + S-adenosyl-L-methionine = N(2)-methylguanosine(1207) in 16S rRNA + S-adenosyl-L-homocysteine + H(+). Functionally, specifically methylates the guanine in position 1207 of 16S rRNA in the 30S particle. The chain is Ribosomal RNA small subunit methyltransferase C from Aliivibrio salmonicida (strain LFI1238) (Vibrio salmonicida (strain LFI1238)).